Reading from the N-terminus, the 247-residue chain is Ubiquinone biosynthesis O-methyltransferase (247 aa).

4 residues coordinate S-adenosyl-L-methionine: Arg39, Gly70, Asp91, and Met134.

The protein belongs to the methyltransferase superfamily. UbiG/COQ3 family.

It carries out the reaction a 3-demethylubiquinol + S-adenosyl-L-methionine = a ubiquinol + S-adenosyl-L-homocysteine + H(+). It catalyses the reaction a 3-(all-trans-polyprenyl)benzene-1,2-diol + S-adenosyl-L-methionine = a 2-methoxy-6-(all-trans-polyprenyl)phenol + S-adenosyl-L-homocysteine + H(+). The protein operates within cofactor biosynthesis; ubiquinone biosynthesis. Functionally, O-methyltransferase that catalyzes the 2 O-methylation steps in the ubiquinone biosynthetic pathway. In Cereibacter sphaeroides (strain ATCC 17023 / DSM 158 / JCM 6121 / CCUG 31486 / LMG 2827 / NBRC 12203 / NCIMB 8253 / ATH 2.4.1.) (Rhodobacter sphaeroides), this protein is Ubiquinone biosynthesis O-methyltransferase.